Here is a 363-residue protein sequence, read N- to C-terminus: Protein-arginine kinase (363 aa).

In terms of domain architecture, Phosphagen kinase C-terminal spans 24 to 254; that stretch reads IVLSSRIRLA…AQLIEQERSA (231 aa). Residues 27–31, histidine 92, arginine 125, 176–180, and 207–212 each bind ATP; these read SSRIR, RASVM, and RGIYGE. The short motif at 337 to 342 is the RDXXRA motif of the pArg binding pocket involved in allosteric regulation element; that stretch reads RDIRRA.

Belongs to the ATP:guanido phosphotransferase family.

It catalyses the reaction L-arginyl-[protein] + ATP = N(omega)-phospho-L-arginyl-[protein] + ADP + H(+). With respect to regulation, appears to be allosterically activated by the binding of pArg-containing polypeptides to the pArg-binding pocket localized in the C-terminal domain of McsB. Functionally, catalyzes the specific phosphorylation of arginine residues in a large number of proteins. Is part of the bacterial stress response system. Protein arginine phosphorylation has a physiologically important role and is involved in the regulation of many critical cellular processes, such as protein homeostasis, motility, competence, and stringent and stress responses, by regulating gene expression and protein activity. The sequence is that of Protein-arginine kinase from Bacillus licheniformis (strain ATCC 14580 / DSM 13 / JCM 2505 / CCUG 7422 / NBRC 12200 / NCIMB 9375 / NCTC 10341 / NRRL NRS-1264 / Gibson 46).